The chain runs to 200 residues: Small ribosomal subunit protein uS4 (200 aa).

The tract at residues 21–42 (GTGKELQKRPYPPGQHGPGQRR) is disordered. The 64-residue stretch at 92 to 155 (SRLDNLVYRL…RNLQVIKEAI (64 aa)) folds into the S4 RNA-binding domain.

The protein belongs to the universal ribosomal protein uS4 family. As to quaternary structure, part of the 30S ribosomal subunit. Contacts protein S5. The interaction surface between S4 and S5 is involved in control of translational fidelity.

In terms of biological role, one of the primary rRNA binding proteins, it binds directly to 16S rRNA where it nucleates assembly of the body of the 30S subunit. Its function is as follows. With S5 and S12 plays an important role in translational accuracy. This Geobacillus thermodenitrificans (strain NG80-2) protein is Small ribosomal subunit protein uS4.